A 775-amino-acid polypeptide reads, in one-letter code: Endothelin-converting enzyme-like 1 (775 aa).

The Cytoplasmic portion of the chain corresponds to 1–61; that stretch reads MEAPYSMTAH…LPRWNRREVC (61 aa). The interval 23 to 51 is disordered; it reads CGTGGARGTSLPPGFPRSSGRSASGARSG. Over residues 32 to 51 the composition is skewed to low complexity; the sequence is SLPPGFPRSSGRSASGARSG. Residues 62 to 82 form a helical; Signal-anchor for type II membrane protein membrane-spanning segment; it reads LLSGLVFAAGLCAILAAMLAL. Topologically, residues 83-775 are lumenal; sequence KYLGPGAAGT…MNPVHKCSVW (693 aa). The Peptidase M13 domain maps to 99–775; it reads GCPERKAFAR…MNPVHKCSVW (677 aa). 4 disulfide bridges follow: Cys-124-Cys-760, Cys-132-Cys-720, Cys-188-Cys-441, and Cys-649-Cys-772. 2 N-linked (GlcNAc...) asparagine glycosylation sites follow: Asn-255 and Asn-322. His-612 lines the Zn(2+) pocket. Glu-613 is a catalytic residue. His-616 lines the Zn(2+) pocket. Residue Asn-656 is glycosylated (N-linked (GlcNAc...) asparagine). Residue Glu-672 coordinates Zn(2+). Asp-676 (proton donor) is an active-site residue.

It belongs to the peptidase M13 family. The cofactor is Zn(2+). As to expression, highly expressed in the CNS, in particular in neurons of the caudate putamen, diagonal band, the paraventricular nucleus of the thalamus, part of the hypothalamus, in cranial motor nuclei, inferior olive, and substantia gelatinosa of the spinal tract trigeminal nucleus. Not detected in cerebral cortex, hippocampus and cerebellum.

Its subcellular location is the membrane. Its function is as follows. May contribute to the degradation of peptide hormones and be involved in the inactivation of neuronal peptides. Cleaves the synthetic substrate Z-Gly-Gly-Leu-pNA and releases pNA. May protect against C2-ceramide-induced apoptosis. The protein is Endothelin-converting enzyme-like 1 (Ecel1) of Rattus norvegicus (Rat).